We begin with the raw amino-acid sequence, 36 residues long: MEVNQLGFIATALFVLVPSVFLIILYVQTESQQKSS.

Met-1 is modified (blocked amino end (Met)). Over 1 to 11 (MEVNQLGFIAT) the chain is Lumenal. A helical membrane pass occupies residues 12 to 27 (ALFVLVPSVFLIILYV). Over 28-36 (QTESQQKSS) the chain is Cytoplasmic.

This sequence belongs to the PsbM family. PSII is composed of 1 copy each of membrane proteins PsbA, PsbB, PsbC, PsbD, PsbE, PsbF, PsbH, PsbI, PsbJ, PsbK, PsbL, PsbM, PsbT, PsbX, PsbY, PsbZ, Psb30/Ycf12, peripheral proteins PsbO, CyanoQ (PsbQ), PsbU, PsbV, PsbU, PsbV and a large number of cofactors. It forms dimeric complexes. The cofactor is PSII binds multiple chlorophylls, carotenoids and specific lipids..

The protein localises to the cellular thylakoid membrane. One of the components of the core complex of photosystem II (PSII). PSII is a light-driven water:plastoquinone oxidoreductase that uses light energy to abstract electrons from H(2)O, generating O(2) and a proton gradient subsequently used for ATP formation. It consists of a core antenna complex that captures photons, and an electron transfer chain that converts photonic excitation into a charge separation. This subunit is found at the monomer-monomer interface. Probably involved in dimerization of PSII; at the monomer-monomer interface the only protein-protein contacts observed are between the 2 PsbM subunits. Lipids, chlorophylls and carotenoids contribute strongly to PSII dimerization. The polypeptide is Photosystem II reaction center protein M (Thermostichus vulcanus (Synechococcus vulcanus)).